Consider the following 483-residue polypeptide: MSPVASKEKPHAVFVPFPAQGHINPMLQLAKLLNYKGFHITFVNTEFNHKRMLESQGSHALDGLPSFRFETIPDGLPPADADARRNLPLVCDSTSKTCLAPFEALLTKLNSSPDSPPVTCIVADGVTSFTLDAAEHFGIPEVLFWTTSACGLMGYVQYYRLIEKGLTPFKDAKDFANGYLDTEIDWIPGMKDVRLKDMPSFIRTTDPNDIMLHYMVSETERSKKASAIILNTFDALEQEVVDALSTLLPPIYSIGPLQLPYSEIPSEYNDLKAIGSNLWAENTECLNWLDTKEPNSVVYVNFGSTTVMTNEQLVEFSWGLANSKKPFLWIIRPGLVAGETAVVPPEFLEETKERGMLASWCPQEQVLLHSAIGGFLTHSGWNSTLEALCGGVPLICWPFFAEQQTNVRYSCTQWGIGIEIDGEVKRDYIDGLVRTLMDGEEGKKMRKKALEWKMLAEDATAPKGSSYLALENVVSKVLLSPRD.

His-22 acts as the Proton acceptor in catalysis. His-22 is an an anthocyanidin binding site. Asp-124 serves as the catalytic Charge relay. UDP-alpha-D-glucose contacts are provided by Thr-146, Gln-363, His-378, Trp-381, Asn-382, Ser-383, and Glu-386. Ala-401 serves as a coordination point for an anthocyanidin. Positions 402 and 403 each coordinate UDP-alpha-D-glucose.

The protein belongs to the UDP-glycosyltransferase family.

The catalysed reaction is (R)-mandelonitrile + UDP-alpha-D-glucose = (R)-prunasin + UDP + H(+). Functionally, involved in the biosynthesis of the cyanogenic glycoside (R)-prunasin, a precursor of (R)-amygdalin, which at high concentrations is associated with intense bitterness in kernels of almond. Stereo-selectively glucosylates (R)-mandelonitrile to produce (R)-prunasin. In Prunus dulcis (Almond), this protein is (R)-mandelonitrile beta-glucosyltransferase.